Here is a 513-residue protein sequence, read N- to C-terminus: Activin receptor type-2A (513 aa).

The first 19 residues, 1–19 (MGAAAKLAFAVFLISCSSG), serve as a signal peptide directing secretion. Residues 20–135 (AILGRSETQE…TSNPVTPKPP (116 aa)) lie on the Extracellular side of the membrane. Intrachain disulfides connect Cys-30/Cys-60, Cys-50/Cys-78, Cys-85/Cys-104, Cys-91/Cys-103, and Cys-105/Cys-110. Residues Asn-43 and Asn-66 are each glycosylated (N-linked (GlcNAc...) asparagine). Residues 136–161 (YYNILLYSLVPLMLVAGIVICAFWVY) traverse the membrane as a helical segment. The Cytoplasmic segment spans residues 162–513 (RHHKMAYPPV…VDFPPKESSL (352 aa)). A Protein kinase domain is found at 192-485 (LQLLEVKARG…GERITQMQRL (294 aa)). Residues 198-206 (KARGGFGCV) and Lys-219 each bind ATP. Asp-322 serves as the catalytic Proton acceptor.

Belongs to the protein kinase superfamily. TKL Ser/Thr protein kinase family. TGFB receptor subfamily. Part of a complex consisting of MAGI2/ARIP1, ACVR2A, ACVR1B and SMAD3. Interacts with MAGI2/ARIP1. Interacts with type I receptor ACVR1. Interacts with TSC22D1/TSC-22. Interacts with activin A/INHBA. It depends on Mg(2+) as a cofactor. Mn(2+) is required as a cofactor.

It localises to the cell membrane. It carries out the reaction L-threonyl-[receptor-protein] + ATP = O-phospho-L-threonyl-[receptor-protein] + ADP + H(+). The enzyme catalyses L-seryl-[receptor-protein] + ATP = O-phospho-L-seryl-[receptor-protein] + ADP + H(+). Functionally, on ligand binding, forms a receptor complex consisting of two type II and two type I transmembrane serine/threonine kinases. Type II receptors phosphorylate and activate type I receptors which autophosphorylate, then bind and activate SMAD transcriptional regulators. Receptor for activin A, activin B and inhibin A. Mediates induction of adipogenesis by GDF6. This chain is Activin receptor type-2A (ACVR2A), found in Ovis aries (Sheep).